The following is a 795-amino-acid chain: Phenylalanine--tRNA ligase beta subunit (795 aa).

The 110-residue stretch at 39–148 (AGSFHGVVVG…ADAPIGTDIR (110 aa)) folds into the tRNA-binding domain. The 76-residue stretch at 401 to 476 (PKRATITLRR…RVYGYNNIPD (76 aa)) folds into the B5 domain. Asp-454, Asp-460, Glu-463, and Glu-464 together coordinate Mg(2+). Positions 701–794 (SRFPANRRDI…LKERFQASLR (94 aa)) constitute an FDX-ACB domain.

It belongs to the phenylalanyl-tRNA synthetase beta subunit family. Type 1 subfamily. In terms of assembly, tetramer of two alpha and two beta subunits. Mg(2+) is required as a cofactor.

The protein localises to the cytoplasm. The catalysed reaction is tRNA(Phe) + L-phenylalanine + ATP = L-phenylalanyl-tRNA(Phe) + AMP + diphosphate + H(+). In Shigella dysenteriae serotype 1 (strain Sd197), this protein is Phenylalanine--tRNA ligase beta subunit.